The primary structure comprises 404 residues: Serpin-Z2B (404 aa).

The interval G349–F373 is RCL.

Belongs to the serpin family.

Probable serine protease inhibitor. The polypeptide is Serpin-Z2B (Oryza sativa subsp. japonica (Rice)).